The chain runs to 447 residues: Phosphoglucosamine mutase (447 aa).

Catalysis depends on S100, which acts as the Phosphoserine intermediate. Residues S100, D239, D241, and D243 each contribute to the Mg(2+) site. Phosphoserine is present on S100.

The protein belongs to the phosphohexose mutase family. Mg(2+) is required as a cofactor. Activated by phosphorylation.

The enzyme catalyses alpha-D-glucosamine 1-phosphate = D-glucosamine 6-phosphate. Its function is as follows. Catalyzes the conversion of glucosamine-6-phosphate to glucosamine-1-phosphate. The sequence is that of Phosphoglucosamine mutase from Dictyoglomus turgidum (strain DSM 6724 / Z-1310).